Here is a 280-residue protein sequence, read N- to C-terminus: 3-dehydroshikimate dehydratase (280 aa).

Substrate contacts are provided by tyrosine 70, arginine 102, and glutamate 142. Mn(2+) is bound at residue glutamate 142. Catalysis depends on histidine 144, which acts as the Proton acceptor. Residues aspartate 172 and histidine 175 each coordinate substrate. Aspartate 172 contacts Mn(2+). Residue histidine 198 participates in Mn(2+) binding. Substrate-binding residues include tyrosine 217 and glutamate 253. Residue glutamate 253 coordinates Mn(2+).

In terms of assembly, homodimer. Mn(2+) is required as a cofactor.

It catalyses the reaction 3-dehydroshikimate = 3,4-dihydroxybenzoate + H2O. It participates in aromatic compound metabolism; 3,4-dihydroxybenzoate biosynthesis; 3,4-dihydroxybenzoate from 3-dehydroquinate: step 2/2. The protein operates within siderophore biosynthesis; petrobactin biosynthesis. Functionally, involved in the biosynthesis of petrobactin, a catecholate siderophore that functions in both iron acquisition and virulence. Catalyzes the conversion of 3-dehydroshikimate to 3,4-dihydroxybenzoate (3,4-DHBA). The chain is 3-dehydroshikimate dehydratase from Bacillus anthracis.